Here is a 937-residue protein sequence, read N- to C-terminus: Leucine--tRNA ligase (937 aa).

The 'HIGH' region motif lies at 34–44 (PYPSGAMHIGH). The 'KMSKS' region motif lies at 609–613 (KMSSS).

It belongs to the class-I aminoacyl-tRNA synthetase family.

The protein resides in the cytoplasm. It carries out the reaction tRNA(Leu) + L-leucine + ATP = L-leucyl-tRNA(Leu) + AMP + diphosphate. The sequence is that of Leucine--tRNA ligase from Methanothermobacter thermautotrophicus (strain ATCC 29096 / DSM 1053 / JCM 10044 / NBRC 100330 / Delta H) (Methanobacterium thermoautotrophicum).